Reading from the N-terminus, the 140-residue chain is ATP synthase epsilon chain (140 aa).

It belongs to the ATPase epsilon chain family. F-type ATPases have 2 components, CF(1) - the catalytic core - and CF(0) - the membrane proton channel. CF(1) has five subunits: alpha(3), beta(3), gamma(1), delta(1), epsilon(1). CF(0) has three main subunits: a, b and c.

Its subcellular location is the cell membrane. In terms of biological role, produces ATP from ADP in the presence of a proton gradient across the membrane. The protein is ATP synthase epsilon chain (atpC) of Enterococcus hirae (strain ATCC 9790 / DSM 20160 / JCM 8729 / LMG 6399 / NBRC 3181 / NCIMB 6459 / NCDO 1258 / NCTC 12367 / WDCM 00089 / R).